The following is a 430-amino-acid chain: Adenylosuccinate synthetase (430 aa).

GTP-binding positions include 13-19 (GDEGKGK) and 41-43 (GHT). Asp14 functions as the Proton acceptor in the catalytic mechanism. Mg(2+)-binding residues include Asp14 and Gly41. Residues 14-17 (DEGK), 39-42 (NAGH), Thr130, Arg144, Gln225, Thr240, and Arg304 contribute to the IMP site. His42 (proton donor) is an active-site residue. Residue 300–306 (STTGRAR) participates in substrate binding. GTP-binding positions include Arg306, 332 to 334 (KLD), and 414 to 416 (STG).

The protein belongs to the adenylosuccinate synthetase family. Homodimer. It depends on Mg(2+) as a cofactor.

It localises to the cytoplasm. The enzyme catalyses IMP + L-aspartate + GTP = N(6)-(1,2-dicarboxyethyl)-AMP + GDP + phosphate + 2 H(+). The protein operates within purine metabolism; AMP biosynthesis via de novo pathway; AMP from IMP: step 1/2. In terms of biological role, plays an important role in the de novo pathway of purine nucleotide biosynthesis. Catalyzes the first committed step in the biosynthesis of AMP from IMP. This Pseudomonas entomophila (strain L48) protein is Adenylosuccinate synthetase.